We begin with the raw amino-acid sequence, 381 residues long: Chymosin (381 aa).

The N-terminal stretch at 1 to 16 (MRGFVVLLAVFALSQA) is a signal peptide. Positions 17 to 58 (SGIVRIPLHKGKSLRRALKERGLLEDFLKNHQHAVSRKHSNS) are cleaved as a propeptide — activation peptide. Positions 74-378 (YFGKIYIGTP…DRASNLVGLA (305 aa)) constitute a Peptidase A1 domain. Residue Asp92 is part of the active site. Repeat unit 1 spans residues 92-102 (DTGSSDLWVPS). 2 cysteine pairs are disulfide-bonded: Cys105–Cys110 and Cys265–Cys269. The active site involves Asp274. Copy 2 of the repeat occupies 274 to 284 (DTGTSMLVGPG). Cys308 and Cys341 are disulfide-bonded.

Belongs to the peptidase A1 family. As to quaternary structure, monomer.

It carries out the reaction Broad specificity similar to that of pepsin A. Clots milk by cleavage of a single 104-Ser-Phe-|-Met-Ala-107 bond in kappa-chain of casein.. With respect to regulation, inhibited by pepstatin. Hydrolyzes a variety of proteins. The chain is Chymosin (CYM) from Callithrix jacchus (White-tufted-ear marmoset).